The chain runs to 238 residues: Orotidine 5'-phosphate decarboxylase (238 aa).

Substrate contacts are provided by residues Asp-10, Lys-32, 59–68 (DLKLHDIPNT), Thr-122, Arg-184, Gln-193, Gly-213, and Arg-214. Lys-61 acts as the Proton donor in catalysis.

This sequence belongs to the OMP decarboxylase family. Type 1 subfamily. As to quaternary structure, homodimer.

It carries out the reaction orotidine 5'-phosphate + H(+) = UMP + CO2. It functions in the pathway pyrimidine metabolism; UMP biosynthesis via de novo pathway; UMP from orotate: step 2/2. In terms of biological role, catalyzes the decarboxylation of orotidine 5'-monophosphate (OMP) to uridine 5'-monophosphate (UMP). In Bacillus cytotoxicus (strain DSM 22905 / CIP 110041 / 391-98 / NVH 391-98), this protein is Orotidine 5'-phosphate decarboxylase.